The following is a 417-amino-acid chain: Type II methyltransferase M.Eco47II (417 aa).

In terms of domain architecture, SAM-dependent MTase C5-type spans 81–414; the sequence is YTVLELFAGA…KSVVHLLDKI (334 aa). Residue C153 is part of the active site.

The protein belongs to the class I-like SAM-binding methyltransferase superfamily. C5-methyltransferase family.

The enzyme catalyses a 2'-deoxycytidine in DNA + S-adenosyl-L-methionine = a 5-methyl-2'-deoxycytidine in DNA + S-adenosyl-L-homocysteine + H(+). Its function is as follows. A methylase that recognizes the double-stranded sequence 5'-GGNCC-3', methylates C-? on both strands, and protects the DNA from cleavage by both the Eco47I and Eco47II endonucleases. This is Type II methyltransferase M.Eco47II from Escherichia coli.